The sequence spans 732 residues: Prolyl tripeptidyl peptidase (732 aa).

The N-terminal stretch at 1–24 (MKKTIFQQLFLSVCALTVALPCSA) is a signal peptide. Active-site charge relay system residues include S603, D678, and H710.

Belongs to the peptidase S9B family.

The catalysed reaction is Hydrolysis of Xaa-Xaa-Pro-|-Yaa- releasing the N-terminal tripeptide of a peptide with Pro as the third residue (position P1) and where Yaa is not proline.. Its function is as follows. Serine proteinase. Releases tripeptides from the free amino terminus of proteins. Has a requirement for Pro in the P1 position, but is inactivated by Pro in the P1' position. This chain is Prolyl tripeptidyl peptidase, found in Porphyromonas gingivalis (strain ATCC 33277 / DSM 20709 / CIP 103683 / JCM 12257 / NCTC 11834 / 2561).